The primary structure comprises 325 residues: Peroxidase RIP1 (325 aa).

Residues 1 to 21 (MASSSPCQIFLVFVMVTLVTS) form the signal peptide. 4 cysteine pairs are disulfide-bonded: Cys38–Cys118, Cys71–Cys76, Cys125–Cys321, and Cys206–Cys231. The active-site Proton acceptor is His69. Ca(2+)-binding residues include Asp70, Val73, Gly75, Asp77, and Ser79. N-linked (GlcNAc...) asparagine glycosylation is present at Asn87. Residue Pro169 participates in substrate binding. N-linked (GlcNAc...) asparagine glycosylation occurs at Asn174. His199 serves as a coordination point for heme b. Thr200 contacts Ca(2+). Asn215 carries N-linked (GlcNAc...) asparagine glycosylation. The Ca(2+) site is built by Asp244, Thr246, and Glu251.

Belongs to the peroxidase family. Classical plant (class III) peroxidase subfamily. Heme b serves as cofactor. The cofactor is Ca(2+). In terms of tissue distribution, expressed in the differentiating root epidermis following inoculation with the bacterial symbiont Sinorhizobium meliloti.

It is found in the secreted. It carries out the reaction 2 a phenolic donor + H2O2 = 2 a phenolic radical donor + 2 H2O. Its function is as follows. Removal of H(2)O(2), oxidation of toxic reductants, biosynthesis and degradation of lignin, suberization, auxin catabolism, response to environmental stresses such as wounding, pathogen attack and oxidative stress. These functions might be dependent on each isozyme/isoform in each plant tissue. The polypeptide is Peroxidase RIP1 (Medicago truncatula (Barrel medic)).